A 501-amino-acid chain; its full sequence is Probable cytochrome P450 28d2 (501 aa).

C446 serves as a coordination point for heme.

Belongs to the cytochrome P450 family. The cofactor is heme.

It is found in the endoplasmic reticulum membrane. The protein localises to the microsome membrane. Its function is as follows. May be involved in the metabolism of insect hormones and in the breakdown of synthetic insecticides. In Drosophila melanogaster (Fruit fly), this protein is Probable cytochrome P450 28d2 (Cyp28d2).